Consider the following 202-residue polypeptide: Small ribosomal subunit protein uS4c (202 aa).

Residues 90 to 153 (MRLDNIIFRL…KSEAIISKNI (64 aa)) form the S4 RNA-binding domain.

Belongs to the universal ribosomal protein uS4 family. Part of the 30S ribosomal subunit. Contacts protein S5. The interaction surface between S4 and S5 is involved in control of translational fidelity.

The protein localises to the plastid. It is found in the chloroplast. In terms of biological role, one of the primary rRNA binding proteins, it binds directly to 16S rRNA where it nucleates assembly of the body of the 30S subunit. With S5 and S12 plays an important role in translational accuracy. This is Small ribosomal subunit protein uS4c (rps4) from Hookeria lucens (Moss).